A 327-amino-acid polypeptide reads, in one-letter code: Malate dehydrogenase (327 aa).

Residue 11–17 (GAAGQIS) coordinates NAD(+). Substrate contacts are provided by Arg-92 and Arg-98. NAD(+) contacts are provided by residues Asn-105, Gln-112, and 129-131 (VGN). The substrate site is built by Asn-131 and Arg-162. Residue His-187 is the Proton acceptor of the active site.

It belongs to the LDH/MDH superfamily. MDH type 2 family.

The enzyme catalyses (S)-malate + NAD(+) = oxaloacetate + NADH + H(+). In terms of biological role, catalyzes the reversible oxidation of malate to oxaloacetate. This Teredinibacter turnerae (strain ATCC 39867 / T7901) protein is Malate dehydrogenase.